A 556-amino-acid polypeptide reads, in one-letter code: 2-succinyl-5-enolpyruvyl-6-hydroxy-3-cyclohexene-1-carboxylate synthase (556 aa).

This sequence belongs to the TPP enzyme family. MenD subfamily. Homodimer. The cofactor is Mg(2+). It depends on Mn(2+) as a cofactor. Requires thiamine diphosphate as cofactor.

The catalysed reaction is isochorismate + 2-oxoglutarate + H(+) = 5-enolpyruvoyl-6-hydroxy-2-succinyl-cyclohex-3-ene-1-carboxylate + CO2. It functions in the pathway quinol/quinone metabolism; 1,4-dihydroxy-2-naphthoate biosynthesis; 1,4-dihydroxy-2-naphthoate from chorismate: step 2/7. It participates in quinol/quinone metabolism; menaquinone biosynthesis. Functionally, catalyzes the thiamine diphosphate-dependent decarboxylation of 2-oxoglutarate and the subsequent addition of the resulting succinic semialdehyde-thiamine pyrophosphate anion to isochorismate to yield 2-succinyl-5-enolpyruvyl-6-hydroxy-3-cyclohexene-1-carboxylate (SEPHCHC). This Escherichia coli O7:K1 (strain IAI39 / ExPEC) protein is 2-succinyl-5-enolpyruvyl-6-hydroxy-3-cyclohexene-1-carboxylate synthase.